Consider the following 481-residue polypeptide: ATP synthase subunit beta (481 aa).

Position 154–161 (154–161 (GGAGVGKT)) interacts with ATP.

This sequence belongs to the ATPase alpha/beta chains family. F-type ATPases have 2 components, CF(1) - the catalytic core - and CF(0) - the membrane proton channel. CF(1) has five subunits: alpha(3), beta(3), gamma(1), delta(1), epsilon(1). CF(0) has three main subunits: a(1), b(2) and c(9-12). The alpha and beta chains form an alternating ring which encloses part of the gamma chain. CF(1) is attached to CF(0) by a central stalk formed by the gamma and epsilon chains, while a peripheral stalk is formed by the delta and b chains.

The protein localises to the cell inner membrane. It catalyses the reaction ATP + H2O + 4 H(+)(in) = ADP + phosphate + 5 H(+)(out). In terms of biological role, produces ATP from ADP in the presence of a proton gradient across the membrane. The catalytic sites are hosted primarily by the beta subunits. This chain is ATP synthase subunit beta, found in Novosphingobium aromaticivorans (strain ATCC 700278 / DSM 12444 / CCUG 56034 / CIP 105152 / NBRC 16084 / F199).